Here is a 952-residue protein sequence, read N- to C-terminus: Glycine dehydrogenase (decarboxylating) (952 aa).

An N6-(pyridoxal phosphate)lysine modification is found at Lys-696.

It belongs to the GcvP family. As to quaternary structure, the glycine cleavage system is composed of four proteins: P, T, L and H. Pyridoxal 5'-phosphate serves as cofactor.

The enzyme catalyses N(6)-[(R)-lipoyl]-L-lysyl-[glycine-cleavage complex H protein] + glycine + H(+) = N(6)-[(R)-S(8)-aminomethyldihydrolipoyl]-L-lysyl-[glycine-cleavage complex H protein] + CO2. In terms of biological role, the glycine cleavage system catalyzes the degradation of glycine. The P protein binds the alpha-amino group of glycine through its pyridoxal phosphate cofactor; CO(2) is released and the remaining methylamine moiety is then transferred to the lipoamide cofactor of the H protein. The sequence is that of Glycine dehydrogenase (decarboxylating) from Pelagibacter ubique (strain HTCC1062).